The chain runs to 642 residues: Mini-chromosome maintenance complex-binding protein (642 aa).

The segment covering 151–161 (ARVSPSTSYTP) has biased composition (polar residues). The interval 151–197 (ARVSPSTSYTPSRHKRSYEDDDDMDLQPNKQKDQHAGARQAGSVGGL) is disordered. Ser154 is modified (phosphoserine). Thr160 carries the post-translational modification Phosphothreonine. Phosphoserine occurs at positions 167 and 298.

Belongs to the MCMBP family. Interacts with the MCM complex: associates with the MCM3-7 complex which lacks MCM2, while it does not interact with the MCM complex when MCM2 is present (MCM2-7 complex). Interacts with the RPA complex, when composed of all RPA1, RPA2 and RPA3 components, but not with RPA1 or RPA2 alone.

The protein localises to the nucleus. Its function is as follows. Associated component of the MCM complex that acts as a regulator of DNA replication. Binds to the MCM complex during late S phase and promotes the disassembly of the MCM complex from chromatin, thereby acting as a key regulator of pre-replication complex (pre-RC) unloading from replicated DNA. Can dissociate the MCM complex without addition of ATP; probably acts by destabilizing interactions of each individual subunits of the MCM complex. Required for sister chromatid cohesion. The protein is Mini-chromosome maintenance complex-binding protein (MCMBP) of Homo sapiens (Human).